The primary structure comprises 400 residues: Large envelope protein (400 aa).

N-acetylmethionine is present on M1. A lipid anchor (N-myristoyl glycine; by host) is attached at G2. Residues 2–119 (GGRLPKPRKG…PPLRDSHPQA (118 aa)) are pre-S1. The pre-S stretch occupies residues 2-174 (GGRLPKPRKG…SSRIGDPAPT (173 aa)). Over 2-181 (GGRLPKPRKG…APTMENITSG (180 aa)) the chain is Virion surface; in external conformation. The Intravirion; in internal conformation segment spans residues 2-253 (GGRLPKPRKG…PGYRWMCLRR (252 aa)). N-linked (GlcNAc...) asparagine glycosylation occurs at R4. The interval 84-116 (TLTTVPAVPPPASTNRQSGRQPTPISPPLRDSH) is disordered. Polar residues predominate over residues 96 to 106 (STNRQSGRQPT). Positions 120–174 (MQWNSTKFHQTLQDPRVRGLYFPAGGSSSGTVNPAPNIASHISSISSRIGDPAPT) are pre-S2. A helical transmembrane segment spans residues 182–202 (FLGPLLVLQAGFFLLTRILTI). The Intravirion; in external conformation portion of the chain corresponds to 203–253 (PQSLDSWWTSLNFLGEAPVCLGQNSQSPTSNHSPTSCPPICPGYRWMCLRR). Residues 254 to 274 (FIIFLFILLLCLIFLLVLLDC) form a helical membrane-spanning segment. Residues 275 to 348 (QGMLPVCPLI…WASVRFSWLS (74 aa)) are Virion surface-facing. Residue N320 is glycosylated (N-linked (GlcNAc...) asparagine; by host). The chain crosses the membrane as a helical span at residues 349–369 (LLVPFVQWFVGLSPTVWLSVI). Over 370–375 (WMMWYW) the chain is Intravirion. A helical transmembrane segment spans residues 376–398 (GPSLYNILSPFIPLLPIFFCLWV). Residues 399–400 (YI) are Virion surface-facing.

Belongs to the orthohepadnavirus major surface antigen family. In terms of assembly, in its internal form (Li-HBsAg), interacts with the capsid protein and with the isoform S. Interacts with host chaperone CANX. As to quaternary structure, associates with host chaperone CANX through its pre-S2 N glycan; this association may be essential for isoform M proper secretion. Interacts with isoform L. Interacts with the antigens of satellite virus HDV (HDVAgs); this interaction is required for encapsidation of HDV genomic RNA. In terms of processing, isoform M is N-terminally acetylated by host at a ratio of 90%, and N-glycosylated by host at the pre-S2 region. Myristoylated.

It is found in the virion membrane. In terms of biological role, the large envelope protein exists in two topological conformations, one which is termed 'external' or Le-HBsAg and the other 'internal' or Li-HBsAg. In its external conformation the protein attaches the virus to cell receptors and thereby initiating infection. This interaction determines the species specificity and liver tropism. This attachment induces virion internalization predominantly through caveolin-mediated endocytosis. The large envelope protein also assures fusion between virion membrane and endosomal membrane. In its internal conformation the protein plays a role in virion morphogenesis and mediates the contact with the nucleocapsid like a matrix protein. The middle envelope protein plays an important role in the budding of the virion. It is involved in the induction of budding in a nucleocapsid independent way. In this process the majority of envelope proteins bud to form subviral lipoprotein particles of 22 nm of diameter that do not contain a nucleocapsid. The polypeptide is Large envelope protein (Hepatitis B virus genotype A3 (isolate Cameroon/CMR711/1994) (HBV-A)).